The following is a 579-amino-acid chain: Protein inscuteable homolog (579 aa).

Residues 74–89 are important for interaction with GPSM2; sequence SVQRWMEDLKLMTECE. The short motif at 576-579 is the PDZ-binding element; that stretch reads ESFV.

Interacts with ALS2CR19/PAR3B and F2RL2/PAR3. Interacts with GPSM1/AGS3 and GPSM2/LGN (via TPR repeat region). Identified in a complex with GPSM2 and F2RL2. As to expression, isoform 1 is expressed in various tissues with stronger expression in liver, kidney and small intestine. Isoform 2 is abundantly expressed in small intestine and to a lower extent in lung and pancreas.

It localises to the cytoplasm. The protein localises to the cell cortex. Functionally, may function as an adapter linking the Par3 complex to the GPSM1/GPSM2 complex. Involved in spindle orientation during mitosis. May regulate cell proliferation and differentiation in the developing nervous system. May play a role in the asymmetric division of fibroblasts and participate in the process of stratification of the squamous epithelium. This chain is Protein inscuteable homolog (INSC), found in Homo sapiens (Human).